The primary structure comprises 230 residues: 3-beta-hydroxysteroid-Delta(8),Delta(7)-isomerase (230 aa).

Threonine 2 carries the post-translational modification N-acetylthreonine. Transmembrane regions (helical) follow at residues 29-49 (SHIL…TWLL), 66-86 (LCWF…FSLY), 121-141 (METV…IAFL), and 185-205 (FWFY…ILVL). In terms of domain architecture, EXPERA spans 61–204 (GRRLALCWFA…VWLVIPSILV (144 aa)).

Belongs to the EBP family.

It is found in the endoplasmic reticulum membrane. The protein resides in the nucleus envelope. The protein localises to the cytoplasmic vesicle. It carries out the reaction lathosterol = 5alpha-cholest-8-en-3beta-ol. The enzyme catalyses zymosterol = 5alpha-cholesta-7,24-dien-3beta-ol. The catalysed reaction is 5,6alpha-epoxy-5alpha-cholestan-3beta-ol + H2O = 5alpha-cholestane-3beta,5,6beta-triol. It catalyses the reaction 5,6beta-epoxy-5beta-cholestan-3beta-ol + H2O = 5alpha-cholestane-3beta,5,6beta-triol. It participates in steroid biosynthesis; cholesterol biosynthesis. Its function is as follows. Isomerase that catalyzes the conversion of Delta(8)-sterols to their corresponding Delta(7)-isomers. Component of the microsomal antiestrogen binding site (AEBS), a multiproteic complex at the ER membrane that consists of an association between EBP and 7-dehydrocholesterol reductase/DHCR7. This complex is responsible for cholesterol-5,6-epoxide hydrolase (ChEH) activity, which consists in the hydration of cholesterol-5,6-epoxides (5,6-EC) into cholestane-3beta,5alpha,6beta-triol (CT). The precise role of each component of this complex has not been described yet. In Mus musculus (Mouse), this protein is 3-beta-hydroxysteroid-Delta(8),Delta(7)-isomerase.